A 342-amino-acid polypeptide reads, in one-letter code: Ribosomal RNA small subunit methyltransferase H (342 aa).

S-adenosyl-L-methionine contacts are provided by residues Gly-62 to His-64, Asp-82, Phe-108, Asp-129, and Gln-136. A disordered region spans residues Arg-280–Pro-319. The segment covering Lys-297–Gly-309 has biased composition (basic residues).

The protein belongs to the methyltransferase superfamily. RsmH family.

It is found in the cytoplasm. The catalysed reaction is cytidine(1402) in 16S rRNA + S-adenosyl-L-methionine = N(4)-methylcytidine(1402) in 16S rRNA + S-adenosyl-L-homocysteine + H(+). In terms of biological role, specifically methylates the N4 position of cytidine in position 1402 (C1402) of 16S rRNA. The sequence is that of Ribosomal RNA small subunit methyltransferase H from Psychrobacter cryohalolentis (strain ATCC BAA-1226 / DSM 17306 / VKM B-2378 / K5).